Here is a 294-residue protein sequence, read N- to C-terminus: MHPRFQSAFAQLAENLQSALAPVLADEHFPALLTAEQVTMLKQATGLDEDALAFALLPLAAACARADLSHFNVGAIARGVSGTWYFGGNMEFLGATMQQTVHAEQSAISHAWLRGEHALNAITVNYTPCGHCRQFMNELNSGLELRINLPGREPHTLGDYLPDAFGPKDLDIKTLLMDEQNHGYALTGDELTQSAIAAANKSHAPYSQSPSGVALECRDGRIFSGSYAENAAFNPTLPPLQGALNLLSLNGYDYPDIQRAILAEKADAPLIQWDATAATLKALGCSNIDRTLLA.

CMP/dCMP-type deaminase domains follow at residues 48–168 and 186–294; these read DEDA…FGPK and LTGD…TLLA. Substrate is bound at residue 89–91; sequence NME. Residue H102 coordinates Zn(2+). E104 acts as the Proton donor in catalysis. C129 and C132 together coordinate Zn(2+).

This sequence belongs to the cytidine and deoxycytidylate deaminase family. As to quaternary structure, homodimer. It depends on Zn(2+) as a cofactor.

It catalyses the reaction cytidine + H2O + H(+) = uridine + NH4(+). The catalysed reaction is 2'-deoxycytidine + H2O + H(+) = 2'-deoxyuridine + NH4(+). This enzyme scavenges exogenous and endogenous cytidine and 2'-deoxycytidine for UMP synthesis. This chain is Cytidine deaminase, found in Enterobacter sp. (strain 638).